A 281-amino-acid chain; its full sequence is Mad-like protein 1 (281 aa).

The span at 71–80 shows a compositional bias: low complexity; it reads SCASNASTSS. Positions 71–105 are disordered; the sequence is SCASNASTSSQPYCSSPPARKSSKHSRTAHNELEK. The interval 95 to 108 is basic motif; that stretch reads HSRTAHNELEKTRR. The 53-residue stretch at 95 to 147 folds into the bHLH domain; it reads HSRTAHNELEKTRRANLRGCLETLKMLVPCVSDATRNTTLALLTRARDHIIEL. Residues 109-147 form a helix-loop-helix motif region; sequence ANLRGCLETLKMLVPCVSDATRNTTLALLTRARDHIIEL. A coiled-coil region spans residues 144–185; it reads IIELQDSNAAQMKKLNDLRDEQDELVAELAQLQADEEVAQAT. The disordered stretch occupies residues 189–213; it reads CQTLSQSRPESRASSFTSTSSRDSP. A compositionally biased stretch (low complexity) spans 200 to 212; it reads RASSFTSTSSRDS.

As to quaternary structure, forms heterodimer with mxl-1 in the presence and absence of DNA. Ubiquitinated. Expressed in intestinal cells in adults. Expressed in D-type motor neuron cell bodies.

Its subcellular location is the nucleus. Its function is as follows. Transcriptional regulator which binds to the E box motif 5'-CACGTG-3', when in a heterodimeric complex with mxl-1. Involved in the control of lifespan in response to dietary restriction, the decline in protein homeostasis associated with normal aging, germline signaling and may overlap with the insulin-like signaling pathway. Plays a role in autophagy. Involved in promoting infection by the microsporidian pathogen N.parisii, possibly together with transcription factors pha-4 and zip-10. In response to neuronal injury, mdl-1 is targeted by sdz-33 for ubiquitin-mediated degradation, probably thereby reducing levels of mdl-1-mxl-1 heterodimers, allowing free mxl-1 to form complexes with tdpt-1 and thus inhibiting tdpt-1-dependent sumoylation of ets-4. The sequence is that of Mad-like protein 1 from Caenorhabditis elegans.